Consider the following 570-residue polypeptide: Periplasmic trehalase (570 aa).

A signal peptide spans methionine 1–alanine 34. Residues arginine 159, tryptophan 166–aspartate 167, asparagine 203, histidine 212–glutamine 214, arginine 284–glutamate 286, and glycine 317 contribute to the substrate site. Active-site proton donor/acceptor residues include aspartate 319 and glutamate 503. Glutamate 518 is a binding site for substrate. The segment at lysine 544–glutamine 570 is disordered. Positions proline 554 to glutamine 570 are enriched in low complexity.

This sequence belongs to the glycosyl hydrolase 37 family. As to quaternary structure, monomer.

The protein localises to the periplasm. The enzyme catalyses alpha,alpha-trehalose + H2O = alpha-D-glucose + beta-D-glucose. In terms of biological role, provides the cells with the ability to utilize trehalose at high osmolarity by splitting it into glucose molecules that can subsequently be taken up by the phosphotransferase-mediated uptake system. This Salmonella paratyphi C (strain RKS4594) protein is Periplasmic trehalase.